Here is a 126-residue protein sequence, read N- to C-terminus: Small ribosomal subunit protein uS12 (126 aa).

The interval 1 to 28 (MPTIQQLIRSERSKVQKKTKSPALKQCP) is disordered. At aspartate 89 the chain carries 3-methylthioaspartic acid. A disordered region spans residues 104-126 (ATGVKDRKQGRSKYGTKREKAKK). The segment covering 113–126 (GRSKYGTKREKAKK) has biased composition (basic residues).

Belongs to the universal ribosomal protein uS12 family. As to quaternary structure, part of the 30S ribosomal subunit. Contacts proteins S8 and S17. May interact with IF1 in the 30S initiation complex.

With S4 and S5 plays an important role in translational accuracy. In terms of biological role, interacts with and stabilizes bases of the 16S rRNA that are involved in tRNA selection in the A site and with the mRNA backbone. Located at the interface of the 30S and 50S subunits, it traverses the body of the 30S subunit contacting proteins on the other side and probably holding the rRNA structure together. The combined cluster of proteins S8, S12 and S17 appears to hold together the shoulder and platform of the 30S subunit. This Synechocystis sp. (strain ATCC 27184 / PCC 6803 / Kazusa) protein is Small ribosomal subunit protein uS12.